A 225-amino-acid chain; its full sequence is Small ribosomal subunit protein uS3 (225 aa).

One can recognise a KH type-2 domain in the interval Val-16 to Lys-85. Positions Gly-200 to Ser-225 are disordered. Over residues Glu-208–Arg-217 the composition is skewed to basic and acidic residues.

This sequence belongs to the universal ribosomal protein uS3 family. Part of the 30S ribosomal subunit.

Functionally, binds the lower part of the 30S subunit head. The sequence is that of Small ribosomal subunit protein uS3 from Thermoplasma volcanium (strain ATCC 51530 / DSM 4299 / JCM 9571 / NBRC 15438 / GSS1).